A 93-amino-acid chain; its full sequence is uncharacterized protein (93 aa).

3 consecutive transmembrane segments (helical) span residues 9–29, 40–60, and 66–86; these read ITVIGYIAGTLTTFASLPQLI, ISLAFVITFTTGLTLWLIYGI, and PIIVFNILSLMFWIPITYLKI.

It localises to the cell membrane. This is an uncharacterized protein from Methanocaldococcus jannaschii (strain ATCC 43067 / DSM 2661 / JAL-1 / JCM 10045 / NBRC 100440) (Methanococcus jannaschii).